The sequence spans 154 residues: MAFISTPLGKVTVKSATVSANRRGLRMQSDSEPVVSRRALLSGALAAAVAAALARARPAQARIDYEGIGYLGGGDKIDVNNANVRAYRKFPGLYPTAAKKIVQGGPYGTPDDILKNPELSERDKEVIKKYMDRFVALPPTPEYFTDRVNNGIYK.

The transit peptide at 1 to 36 (MAFISTPLGKVTVKSATVSANRRGLRMQSDSEPVVS) directs the protein to the chloroplast. Residues 37–61 (RRALLSGALAAAVAAALARARPAQA) constitute a thylakoid transit peptide.

The protein belongs to the PsbU family. In terms of assembly, PSII is composed of 1 copy each of membrane proteins PsbA, PsbB, PsbC, PsbD, PsbE, PsbF, PsbH, PsbI, PsbJ, PsbK, PsbL, PsbM, PsbT, PsbY, PsbZ, Psb30/Ycf12, at least 3 peripheral proteins of the oxygen-evolving complex and a large number of cofactors. It forms dimeric complexes. The extrinsic subunits in red algae are PsbO (OEC33), PsbQ', cytochrome c-550 and PsbU. In terms of processing, predicted to be translocated into the thylakoid lumen by the Tat system. The position of the first transit peptide cleavage has not been experimentally proven.

The protein localises to the plastid. It is found in the chloroplast thylakoid membrane. In terms of biological role, one of the extrinsic, lumenal subunits of photosystem II (PSII). PSII is a light-driven water plastoquinone oxidoreductase, using light energy to abstract electrons from H(2)O, generating a proton gradient subsequently used for ATP formation. The extrinsic proteins stabilize the structure of photosystem II oxygen-evolving complex (OEC), the ion environment of oxygen evolution and protect the OEC against heat-induced inactivation. This chain is Photosystem II extrinsic protein U, chloroplastic, found in Cyanidium caldarium (Red alga).